We begin with the raw amino-acid sequence, 181 residues long: Adenylate kinase (181 aa).

Position 10–15 (10–15) interacts with ATP; sequence GAGKGT. Residues 30–59 form an NMP region; the sequence is STGDLFRANISQGTELGKQAQEYMDAGKLV. AMP contacts are provided by residues threonine 31, arginine 36, 57-59, 85-88, and glutamine 92; these read KLV and GFPR. The LID stretch occupies residues 126 to 132; that stretch reads SRGRNDD. Arginine 127 serves as a coordination point for ATP. AMP-binding residues include arginine 129 and arginine 140. Glycine 166 contributes to the ATP binding site.

Belongs to the adenylate kinase family. As to quaternary structure, monomer.

It localises to the cytoplasm. It catalyses the reaction AMP + ATP = 2 ADP. Its pathway is purine metabolism; AMP biosynthesis via salvage pathway; AMP from ADP: step 1/1. In terms of biological role, catalyzes the reversible transfer of the terminal phosphate group between ATP and AMP. Plays an important role in cellular energy homeostasis and in adenine nucleotide metabolism. This Corynebacterium urealyticum (strain ATCC 43042 / DSM 7109) protein is Adenylate kinase.